Here is a 313-residue protein sequence, read N- to C-terminus: Glutathione synthetase (313 aa).

In terms of domain architecture, ATP-grasp spans Lys-125–Glu-309. Arg-151–Gly-207 lines the ATP pocket. 2 residues coordinate Mg(2+): Glu-280 and Asn-282.

It belongs to the prokaryotic GSH synthase family. Requires Mg(2+) as cofactor. Mn(2+) serves as cofactor.

The catalysed reaction is gamma-L-glutamyl-L-cysteine + glycine + ATP = glutathione + ADP + phosphate + H(+). It participates in sulfur metabolism; glutathione biosynthesis; glutathione from L-cysteine and L-glutamate: step 2/2. In Rhodopseudomonas palustris (strain ATCC BAA-98 / CGA009), this protein is Glutathione synthetase.